The sequence spans 672 residues: DNA ligase (672 aa).

Residues 32–36 (DEKYD), 82–83 (SL), and E113 contribute to the NAD(+) site. Catalysis depends on K115, which acts as the N6-AMP-lysine intermediate. Residues R136, E173, K290, and K314 each coordinate NAD(+). Zn(2+) contacts are provided by C408, C411, C427, and C433. In terms of domain architecture, BRCT spans 592 to 672 (DNNNTLFRKK…EFLNIINVYL (81 aa)).

Belongs to the NAD-dependent DNA ligase family. LigA subfamily. It depends on Mg(2+) as a cofactor. The cofactor is Mn(2+).

The catalysed reaction is NAD(+) + (deoxyribonucleotide)n-3'-hydroxyl + 5'-phospho-(deoxyribonucleotide)m = (deoxyribonucleotide)n+m + AMP + beta-nicotinamide D-nucleotide.. Its function is as follows. DNA ligase that catalyzes the formation of phosphodiester linkages between 5'-phosphoryl and 3'-hydroxyl groups in double-stranded DNA using NAD as a coenzyme and as the energy source for the reaction. It is essential for DNA replication and repair of damaged DNA. In Buchnera aphidicola subsp. Baizongia pistaciae (strain Bp), this protein is DNA ligase.